Here is a 271-residue protein sequence, read N- to C-terminus: GTP cyclohydrolase FolE2 (271 aa).

The protein belongs to the GTP cyclohydrolase IV family.

The catalysed reaction is GTP + H2O = 7,8-dihydroneopterin 3'-triphosphate + formate + H(+). Its pathway is cofactor biosynthesis; 7,8-dihydroneopterin triphosphate biosynthesis; 7,8-dihydroneopterin triphosphate from GTP: step 1/1. In terms of biological role, converts GTP to 7,8-dihydroneopterin triphosphate. The polypeptide is GTP cyclohydrolase FolE2 (Geotalea uraniireducens (strain Rf4) (Geobacter uraniireducens)).